Reading from the N-terminus, the 78-residue chain is Structural DNA-binding protein p10 (78 aa).

Positions 1 to 25 (MPTKAGTKSTANKKTTKGSSKSGSA) are enriched in low complexity. Positions 1-41 (MPTKAGTKSTANKKTTKGSSKSGSARGHTGKTHAPPSMHSG) are disordered.

The protein belongs to the asfivirus P10 family.

The protein localises to the virion. Its function is as follows. May play a role in genome packaging through direct interaction with viral DNA. Binds to ssDNA and dsDNA with the same apparent affinity in vitro. The chain is Structural DNA-binding protein p10 from African swine fever virus (isolate Warthog/Namibia/Wart80/1980) (ASFV).